Consider the following 875-residue polypeptide: Probable dipeptidyl-aminopeptidase B (875 aa).

The disordered stretch occupies residues 1–90 (MSEPKPIQDT…ASSETTPPRK (90 aa)). The Cytoplasmic portion of the chain corresponds to 1–98 (MSEPKPIQDT…RKGVDRKLKK (98 aa)). Positions 19–28 (SSISSASTTS) are enriched in low complexity. The segment covering 33 to 46 (RLAEESEKNHDASS) has biased composition (basic and acidic residues). The chain crosses the membrane as a helical; Signal-anchor for type II membrane protein span at residues 99-119 (VLLIVGGFFVAAWIVSLVVFL). Residues 120-875 (TNKSYKHGSQ…VNDAKPKIES (756 aa)) are Vacuolar-facing. 2 N-linked (GlcNAc...) asparagine glycosylation sites follow: asparagine 354 and asparagine 567. The disordered stretch occupies residues 689-715 (VDFQSSDGGRRTTRSPRRATGRPSATS). Residues 699-708 (RTTRSPRRAT) show a composition bias toward basic residues. The active-site Charge relay system is serine 726. Asparagine 785 carries N-linked (GlcNAc...) asparagine glycosylation. Active-site charge relay system residues include aspartate 803 and histidine 836.

This sequence belongs to the peptidase S9B family.

It localises to the vacuole membrane. The enzyme catalyses Release of an N-terminal dipeptide, Xaa-Yaa-|-Zaa-, from a polypeptide, preferentially when Yaa is Pro, provided Zaa is neither Pro nor hydroxyproline.. Functionally, type IV dipeptidyl-peptidase which removes N-terminal dipeptides sequentially from polypeptides having unsubstituted N-termini provided that the penultimate residue is proline. This chain is Probable dipeptidyl-aminopeptidase B (DAPB), found in Verticillium alfalfae (strain VaMs.102 / ATCC MYA-4576 / FGSC 10136) (Verticillium wilt of alfalfa).